Reading from the N-terminus, the 415-residue chain is Multidrug resistance protein MdtA (415 aa).

A signal peptide spans 1–21 (MKGSYKSRWVIVIVVVIAAIA). The segment covering 31-46 (DSQSAAPGATKQAQQS) has biased composition (polar residues). Disordered stretches follow at residues 31–56 (DSQS…GMRA) and 391–415 (VEAQ…GARS). Positions 399–415 (PEEKATSREYAKKGARS) are enriched in basic and acidic residues.

This sequence belongs to the membrane fusion protein (MFP) (TC 8.A.1) family. As to quaternary structure, part of a tripartite efflux system composed of MdtA, MdtB and MdtC.

The protein localises to the cell inner membrane. Its function is as follows. The MdtABC tripartite complex confers resistance against novobiocin and deoxycholate. In Escherichia coli O45:K1 (strain S88 / ExPEC), this protein is Multidrug resistance protein MdtA.